The chain runs to 173 residues: Cyclic pyranopterin monophosphate synthase (173 aa).

Substrate is bound by residues 75–77 (MCH) and 117–118 (ME). The active site involves Asp132. The interval 152–173 (SGGKSGHYQRENSSVGGFANEQ) is disordered. Over residues 162-173 (ENSSVGGFANEQ) the composition is skewed to polar residues.

It belongs to the MoaC family. Homohexamer; trimer of dimers.

It carries out the reaction (8S)-3',8-cyclo-7,8-dihydroguanosine 5'-triphosphate = cyclic pyranopterin phosphate + diphosphate. It functions in the pathway cofactor biosynthesis; molybdopterin biosynthesis. Catalyzes the conversion of (8S)-3',8-cyclo-7,8-dihydroguanosine 5'-triphosphate to cyclic pyranopterin monophosphate (cPMP). This Geobacillus sp. (strain WCH70) protein is Cyclic pyranopterin monophosphate synthase.